The chain runs to 632 residues: Golgin subfamily A member 8O (632 aa).

The disordered stretch occupies residues 1–76 (MAEETQHNKL…TSSATLKDLE (76 aa)). The segment covering 38-50 (TNGSIPETATSGG) has biased composition (polar residues). Coiled-coil stretches lie at residues 85 to 150 (VLDS…TDLY) and 209 to 421 (ELEQ…SLMA). Disordered stretches follow at residues 423 to 452 (PGEG…DPES), 505 to 524 (DAAL…DEGE), and 552 to 612 (NSAD…EHPG). Residues 427 to 440 (HGGEHLDSEGEEAP) are compositionally biased toward basic and acidic residues. A compositionally biased stretch (gly residues) spans 508-520 (LGGGHHQAGAQGG). The segment covering 569–578 (AADKHGDLRE) has biased composition (basic and acidic residues).

The protein belongs to the GOLGA6 family.

The sequence is that of Golgin subfamily A member 8O (GOLGA8O) from Homo sapiens (Human).